The primary structure comprises 139 residues: Small ribosomal subunit protein uS11 (139 aa).

Belongs to the universal ribosomal protein uS11 family. As to quaternary structure, part of the 30S ribosomal subunit.

Functionally, located on the platform of the 30S subunit. The sequence is that of Small ribosomal subunit protein uS11 from Pyrobaculum islandicum (strain DSM 4184 / JCM 9189 / GEO3).